The primary structure comprises 148 residues: UPF0260 protein Sfri_1740 (148 aa).

The protein belongs to the UPF0260 family.

This is UPF0260 protein Sfri_1740 from Shewanella frigidimarina (strain NCIMB 400).